We begin with the raw amino-acid sequence, 266 residues long: Killer cell lectin-like receptor 3 (266 aa).

The Cytoplasmic segment spans residues Met1–Lys48. A helical; Signal-anchor for type II membrane protein transmembrane segment spans residues Ala49–Phe69. At Gln70–Asp266 the chain is on the extracellular side. N-linked (GlcNAc...) asparagine glycans are attached at residues Asn79, Asn87, Asn104, and Asn113. Residues Trp147–Ser151 form an involved in dimerization region. Cys149 and Cys154 are oxidised to a cystine. The C-type lectin domain occupies Tyr150–Gly258. N-linked (GlcNAc...) asparagine glycosylation is present at Asn160. Implicated in MHC class I binding stretches follow at residues Asn160–Thr162, Ile195–Pro196, Lys207–Lys208, Met224–Ser233, and Ser240–Glu245. Cystine bridges form between Cys167/Cys255, Cys171/Cys257, and Cys236/Cys249.

Homodimer; disulfide-linked.

It is found in the membrane. Its function is as follows. Receptor on natural killer (NK) cells for class I MHC. This Mus musculus (Mouse) protein is Killer cell lectin-like receptor 3 (Klra3).